The chain runs to 556 residues: 2-succinyl-5-enolpyruvyl-6-hydroxy-3-cyclohexene-1-carboxylate synthase (556 aa).

The protein belongs to the TPP enzyme family. MenD subfamily. In terms of assembly, homodimer. Mg(2+) is required as a cofactor. It depends on Mn(2+) as a cofactor. The cofactor is thiamine diphosphate.

The enzyme catalyses isochorismate + 2-oxoglutarate + H(+) = 5-enolpyruvoyl-6-hydroxy-2-succinyl-cyclohex-3-ene-1-carboxylate + CO2. It functions in the pathway quinol/quinone metabolism; 1,4-dihydroxy-2-naphthoate biosynthesis; 1,4-dihydroxy-2-naphthoate from chorismate: step 2/7. It participates in quinol/quinone metabolism; menaquinone biosynthesis. Its function is as follows. Catalyzes the thiamine diphosphate-dependent decarboxylation of 2-oxoglutarate and the subsequent addition of the resulting succinic semialdehyde-thiamine pyrophosphate anion to isochorismate to yield 2-succinyl-5-enolpyruvyl-6-hydroxy-3-cyclohexene-1-carboxylate (SEPHCHC). This is 2-succinyl-5-enolpyruvyl-6-hydroxy-3-cyclohexene-1-carboxylate synthase from Salmonella heidelberg (strain SL476).